Here is a 1906-residue protein sequence, read N- to C-terminus: DENN domain-containing protein 4C (1906 aa).

Residues 40–199 form the MABP domain; sequence KAPITDIAVI…NVFLCYKKSV (160 aa). The 173-residue stretch at 191–363 folds into the uDENN domain; it reads VFLCYKKSVP…NIPFPSPQRP (173 aa). The cDENN domain maps to 384 to 520; that stretch reads PLPLSGANFS…PCKSLLGTLR (137 aa). Residues 522-640 enclose the dDENN domain; the sequence is LYQQLCSVHR…CSFVSDKDTG (119 aa). 3 positions are modified to phosphoserine: serine 702, serine 736, and serine 740. One copy of the PPR repeat lies at 818-852; that stretch reads DEVCYRVVMQLCGLWVNPVLAVRVLFEMKTARIKP. The span at 904–917 shows a compositional bias: polar residues; it reads SQVFSISGGQSDQG. 2 disordered regions span residues 904–942 and 963–984; these read SQVF…PPEL and LQPT…SIVK. The span at 920 to 939 shows a compositional bias: basic and acidic residues; that stretch reads SKDELVKEGADGHAPEEHTP. Residue threonine 966 is modified to Phosphothreonine. Pro residues predominate over residues 966–975; sequence TPEPQSPTEP. Serine 971 carries the post-translational modification Phosphoserine. A Phosphothreonine modification is found at threonine 973. Serine 987, serine 1000, serine 1043, serine 1058, serine 1096, and serine 1123 each carry phosphoserine. The span at 1154–1171 shows a compositional bias: polar residues; that stretch reads NSLQSNSHSDQSRDTQAG. Residues 1154 to 1184 form a disordered region; the sequence is NSLQSNSHSDQSRDTQAGAQDPVNKRSSSYA. A phosphoserine mark is found at serine 1181, serine 1221, serine 1240, serine 1248, and serine 1274. The tract at residues 1246 to 1317 is disordered; sequence SCSMELHGEG…PQSPYRAYKD (72 aa). Basic and acidic residues predominate over residues 1281 to 1291; sequence PPARDSTETEK. A compositionally biased stretch (polar residues) spans 1292-1302; the sequence is SSPAVSSSKTL. Phosphoserine is present on residues serine 1321, serine 1333, and serine 1342. Disordered regions lie at residues 1410–1440, 1548–1577, and 1596–1628; these read SPNT…GDVG, STSG…SAEP, and ASYT…LSKR. Over residues 1423-1437 the composition is skewed to low complexity; the sequence is LTQSNTSLGSSSSSG. Composition is skewed to polar residues over residues 1548-1564 and 1611-1628; these read STSG…SASE and GDVQ…LSKR. Phosphoserine occurs at positions 1620, 1624, 1626, 1637, and 1796.

In terms of processing, phosphorylated in response to insulin.

It is found in the cytoplasmic vesicle membrane. The protein localises to the cell membrane. Its subcellular location is the cytoplasm. It localises to the cytosol. Its function is as follows. Guanine nucleotide exchange factor (GEF) activating RAB10. Promotes the exchange of GDP to GTP, converting inactive GDP-bound RAB10 into its active GTP-bound form. Thereby, stimulates SLC2A4/GLUT4 glucose transporter-enriched vesicles delivery to the plasma membrane in response to insulin. The sequence is that of DENN domain-containing protein 4C (Dennd4c) from Mus musculus (Mouse).